A 556-amino-acid polypeptide reads, in one-letter code: Valencene synthase (556 aa).

A compositionally biased stretch (polar residues) spans 1-12 (MSTQVSASSLAQ). Residues 1-24 (MSTQVSASSLAQIPQPKNRPVANF) are disordered. 3 residues coordinate Mg(2+): aspartate 310, aspartate 314, and glutamate 462. The DDXXD motif motif lies at 310–314 (DDIHD).

The protein belongs to the terpene synthase family. Tpsa subfamily. It depends on Mg(2+) as a cofactor. As to expression, expressed in flowers and anthers. Detected inside the pollen grains, but not in stems, leaves, tendrils, roots, seeds, pistils or caps.

It is found in the cytoplasm. It catalyses the reaction (2E,6E)-farnesyl diphosphate = (+)-valencene + diphosphate. It carries out the reaction (2E,6E)-farnesyl diphosphate = (-)-7-epi-alpha-selinene + diphosphate. It participates in secondary metabolite biosynthesis; terpenoid biosynthesis. Its function is as follows. Involved in the biosynthesis of valencene, a major volatile emitted from flowers of grapevine. Can use farnesyl diphosphate as substrate, but not geranyl diphosphate or geranylgeranyl diphosphate. Produces mainly (+)-valencene and (-)-7-epi-alpha-selinene along with five minor products. This Vitis vinifera (Grape) protein is Valencene synthase (ValCS).